Consider the following 340-residue polypeptide: tRNA dimethylallyltransferase (340 aa).

Positions 1–25 are disordered; it reads MDQNRSPNGRDCREPPSPSSTARPG. ATP is bound at residue 31–38; it reads GPTATGKS. Substrate is bound at residue 33-38; that stretch reads TATGKS. Positions 56-59 are interaction with substrate tRNA; sequence DSRQ.

The protein belongs to the IPP transferase family. Monomer. It depends on Mg(2+) as a cofactor.

It catalyses the reaction adenosine(37) in tRNA + dimethylallyl diphosphate = N(6)-dimethylallyladenosine(37) in tRNA + diphosphate. Its function is as follows. Catalyzes the transfer of a dimethylallyl group onto the adenine at position 37 in tRNAs that read codons beginning with uridine, leading to the formation of N6-(dimethylallyl)adenosine (i(6)A). The chain is tRNA dimethylallyltransferase from Synechococcus sp. (strain JA-3-3Ab) (Cyanobacteria bacterium Yellowstone A-Prime).